Reading from the N-terminus, the 269-residue chain is Aquaporin-1 (269 aa).

The Cytoplasmic portion of the chain corresponds to 1 to 11; the sequence is MASEIKKKLFW. Residues 12–29 traverse the membrane as a helical segment; it reads RAVVAEFLAMTLFVFISI. Topologically, residues 30-46 are extracellular; sequence GSALGFNYPLERNQTLV. The helical transmembrane segment at 47–65 threads the bilayer; that stretch reads QDNVKVSLAFGLSIATLAQ. Residues 66–68 lie on the Cytoplasmic side of the membrane; the sequence is SVG. Residues 69–82 lie within the membrane without spanning it; the sequence is HISGAHLNPAVTLG. The short motif at 76–78 is the NPA 1 element; that stretch reads NPA. At 83-90 the chain is on the cytoplasmic side; the sequence is LLLSCQIS. The chain crosses the membrane as a helical span at residues 91–109; it reads ILRAVMYIIAQCVGAIVAT. The Extracellular portion of the chain corresponds to 110–133; that stretch reads AILSGITSSLVDNSLGRNDLAHGV. The chain crosses the membrane as a helical span at residues 134-153; the sequence is NSGQGLGIEIIGTLQLVLCV. The Cytoplasmic portion of the chain corresponds to 154-163; the sequence is LATTDRRRRD. Residues 164–181 form a helical membrane-spanning segment; the sequence is LGGSAPLAIGLSVALGHL. The Extracellular portion of the chain corresponds to 182-186; it reads LAIDY. Residues 187–199 lie within the membrane without spanning it; it reads TGCGINPARSFGS. The NPA 2 signature appears at 192–194; the sequence is NPA. At 200–206 the chain is on the extracellular side; that stretch reads AVLTRNF. The N-linked (GlcNAc...) asparagine glycan is linked to Asn205. A helical membrane pass occupies residues 207 to 224; sequence SNHWIFWVGPFIGGALAV. Residues 225–269 lie on the Cytoplasmic side of the membrane; the sequence is LIYDFILAPRSSDFTDRMKVWTSGQVEEYDLDADDINSRVEMKPK. Ser247 carries the post-translational modification Phosphoserine. Tyr253 carries the post-translational modification Phosphotyrosine. Ser262 carries the phosphoserine modification.

Belongs to the MIP/aquaporin (TC 1.A.8) family. Homotetramer; each monomer provides an independent water pore. Component of the ankyrin-1 complex in the erythrocyte, composed of ANK1, RHCE, RHAG, SLC4A1, EPB42, GYPA, GYPB and AQP1. Interacts with EPHB2; involved in endolymph production in the inner ear. Identified in a complex with STOM. Interacts (via the N-terminal) with ANK1 (via ANK 1-5 repeats). Interacts (via the C-terminal) with EPB42. In terms of tissue distribution, detected in erythrocytes (at protein level). In the kidney, expressed on luminal and basal borders of proximal tubules and in the thin limb of Henle's loop (at protein level).

The protein localises to the cell membrane. The catalysed reaction is H2O(in) = H2O(out). It carries out the reaction nitric oxide(out) = nitric oxide(in). It catalyses the reaction CO2(out) = CO2(in). The enzyme catalyses glycerol(in) = glycerol(out). The catalysed reaction is H2O2(out) = H2O2(in). It carries out the reaction K(+)(in) = K(+)(out). It catalyses the reaction Na(+)(in) = Na(+)(out). Forms a water channel that facilitates the transport of water across cell membranes, playing a crucial role in water homeostasis in various tissues. Could also be permeable to small solutes including hydrogen peroxide, glycerol and gases such as amonnia (NH3), nitric oxide (NO) and carbon dioxide (CO2). Recruited to the ankyrin-1 complex, a multiprotein complex of the erythrocyte membrane, it could be part of a CO2 metabolon, linking facilitated diffusion of CO2 across the membrane, anion exchange of Cl(-)/HCO3(-) and interconversion of dissolved CO2 and carbonic acid in the cytosol. In vitro, it shows non-selective gated cation channel activity and may be permeable to cations like K(+) and Na(+) in vivo. This is Aquaporin-1 from Mus musculus (Mouse).